We begin with the raw amino-acid sequence, 209 residues long: Thymidylate kinase (209 aa).

13–20 (GLEGAGKS) contacts ATP.

The protein belongs to the thymidylate kinase family.

The enzyme catalyses dTMP + ATP = dTDP + ADP. Its function is as follows. Phosphorylation of dTMP to form dTDP in both de novo and salvage pathways of dTTP synthesis. This chain is Thymidylate kinase, found in Shewanella sp. (strain MR-4).